Consider the following 24-residue polypeptide: Ascaphin-5 (24 aa).

Expressed by the skin glands.

It is found in the secreted. Antimicrobial peptide. Synthetic peptide shows higher potency against Gram-negative bacteria than against Gram-positive bacteria. Has a very week hemolytic activity. The polypeptide is Ascaphin-5 (Ascaphus truei (Coastal tailed frog)).